We begin with the raw amino-acid sequence, 124 residues long: Large ribosomal subunit protein bL12 (124 aa).

Belongs to the bacterial ribosomal protein bL12 family. Homodimer. Part of the ribosomal stalk of the 50S ribosomal subunit. Forms a multimeric L10(L12)X complex, where L10 forms an elongated spine to which 2 to 4 L12 dimers bind in a sequential fashion. Binds GTP-bound translation factors.

Forms part of the ribosomal stalk which helps the ribosome interact with GTP-bound translation factors. Is thus essential for accurate translation. The sequence is that of Large ribosomal subunit protein bL12 from Desulfitobacterium hafniense (strain DSM 10664 / DCB-2).